Here is a 358-residue protein sequence, read N- to C-terminus: G-protein coupled receptor 87 (358 aa).

Residues 1–47 are Extracellular-facing; the sequence is MGLNLTLTKLPGNELYSQASHTANSTSEGHGKNSTLHNKFDTIILPV. Asparagine 4, asparagine 24, and asparagine 33 each carry an N-linked (GlcNAc...) asparagine glycan. A helical transmembrane segment spans residues 48–68; that stretch reads LYLVIFVASILLNGLAVWIFF. Residues 69–75 are Cytoplasmic-facing; sequence HIRNKTS. Residues 76 to 96 form a helical membrane-spanning segment; it reads FIFYLKNIVVADLIMTLTFPF. Residues 97-116 are Extracellular-facing; sequence RIVRDAGFGPWYFEFILCRY. Cysteine 114 and cysteine 192 are oxidised to a cystine. The helical transmembrane segment at 117 to 137 threads the bilayer; it reads TSVLFYANMYTSIVFLGLISV. Residues 138-159 are Cytoplasmic-facing; it reads DRYLKVVKPFGDSRMYSITFTK. A helical membrane pass occupies residues 160-180; that stretch reads VLSVCVWVIMAILSLPNIILT. Residues 181–208 are Extracellular-facing; that stretch reads NGQPTKENIHDCMKLKSPLGAKWHMAVT. The helical transmembrane segment at 209 to 229 threads the bilayer; that stretch reads YVDSCLFVAVLVILIGCYIAI. Topologically, residues 230–256 are cytoplasmic; it reads SRYIHKSSRQFISQSSRKRKHNQSIRV. A helical transmembrane segment spans residues 257-277; it reads VVAVFFTCFLPYHLCRIPFTF. Residues 278-297 are Extracellular-facing; sequence SNLDRLLDESAHKILYYCKE. Residues 298–318 form a helical membrane-spanning segment; the sequence is MTLFLSACNVCLDPIIYFFMC. At 319–358 the chain is on the cytoplasmic side; sequence KSFSRRLFKKSNIRTRSESIRSLQSVRRSEVRIYYDYTDV.

Belongs to the G-protein coupled receptor 1 family. Expressed at high levels in testis and brain and to a lesser extent placenta, ovary, prostate, and skeletal muscle but not in heart, lung, kidney, liver or intestine.

The protein localises to the cell membrane. Its function is as follows. Receptor for lysophosphatidic acid (LPA). Necessary for p53/TP53-dependent survival in response to DNA damage. Promotes the Hippo-YAP signaling pathway and thereby modulates glycolysis and oxidative stress production by the regulation of hexokinase-2/HK2. The polypeptide is G-protein coupled receptor 87 (Gpr87) (Mus musculus (Mouse)).